The chain runs to 248 residues: 2,3-bisphosphoglycerate-dependent phosphoglycerate mutase (248 aa).

Residues 8–15 (RHGESAWN), 21–22 (TG), Arg-60, 87–90 (EKHY), Lys-98, 114–115 (RR), and 183–184 (GN) each bind substrate. The active-site Tele-phosphohistidine intermediate is His-9. Glu-87 acts as the Proton donor/acceptor in catalysis.

Belongs to the phosphoglycerate mutase family. BPG-dependent PGAM subfamily.

It carries out the reaction (2R)-2-phosphoglycerate = (2R)-3-phosphoglycerate. It participates in carbohydrate degradation; glycolysis; pyruvate from D-glyceraldehyde 3-phosphate: step 3/5. In terms of biological role, catalyzes the interconversion of 2-phosphoglycerate and 3-phosphoglycerate. This Bacteroides fragilis (strain ATCC 25285 / DSM 2151 / CCUG 4856 / JCM 11019 / LMG 10263 / NCTC 9343 / Onslow / VPI 2553 / EN-2) protein is 2,3-bisphosphoglycerate-dependent phosphoglycerate mutase.